A 196-amino-acid chain; its full sequence is MPTPTKGPRLGGGPAHERLMLANLAAALFEHKRITTTVTKAKRLKPYAERLVTFAKRGDLASRRRVLGLISNKGVVHELFTDIAQAVENRDGGYTRITKIGNRKGDNAPMAVIELVLEPVSAKQAVVAEATSAAKRDADKKEAAAAPAAETEVAETEAAPEAEAAEAPKAEAAETEEAPAAEEAAEKPAAEEKDAK.

Residues 133-196 (AAKRDADKKE…KPAAEEKDAK (64 aa)) are disordered. Residues 134 to 143 (AKRDADKKEA) show a composition bias toward basic and acidic residues. Residues 152–164 (EVAETEAAPEAEA) show a composition bias toward acidic residues. A compositionally biased stretch (basic and acidic residues) spans 184–196 (AAEKPAAEEKDAK).

Belongs to the bacterial ribosomal protein bL17 family. In terms of assembly, part of the 50S ribosomal subunit. Contacts protein L32.

This is Large ribosomal subunit protein bL17 from Arthrobacter sp. (strain FB24).